A 392-amino-acid chain; its full sequence is MSSPEKKRKTTKKPSPTPQSTTPNPSLPDDLVVSCLARVSRLYYPTLSLVSKSFRSLIASPDLYKTRSLLGRTESCLYVCLQEKDSDPNPRWFTLCLKPNRTLTNDITEKKKKKKKKKKMSSGYVLAAIPVLHSRPAYWSGLVAVGSNIYNIGGPIDKAHSSIVSVLDCQSHTWHEGPGMRVERRYPAANVVEGKIYVTGGCKDCSNSSNWMEVFDPRTQTWESVSSPGAEIGGCSIHKSAVVEGEILIANSHGLIYKPKEGRWERMKWDMDIGWVWYSYCVVENVLYYYYKGVFKWYDTMARLWRDLKGVKGLPRFARCGGKMADYGGKMAVFWDKIVTSDDGCKNKMILCAVIALERRNSEEIWGKVEWHDAVLTVPLSYEVVYALSPTV.

Basic residues predominate over residues 1–12; it reads MSSPEKKRKTTK. A disordered region spans residues 1-27; the sequence is MSSPEKKRKTTKKPSPTPQSTTPNPSL. The segment covering 18-27 has biased composition (low complexity); the sequence is PQSTTPNPSL. An F-box domain is found at 21 to 67; that stretch reads TTPNPSLPDDLVVSCLARVSRLYYPTLSLVSKSFRSLIASPDLYKTR. 3 Kelch repeats span residues 148-194, 195-242, and 244-285; these read NIYN…VVEG, KIYV…KSAV, and EGEI…VVEN.

In terms of assembly, part of a SCF (ASK-cullin-F-box) protein ligase complex. Interacts with ASK13 and ASK14.

It functions in the pathway protein modification; protein ubiquitination. Functionally, component of SCF(ASK-cullin-F-box) E3 ubiquitin ligase complexes, which may mediate the ubiquitination and subsequent proteasomal degradation of target proteins. In Arabidopsis thaliana (Mouse-ear cress), this protein is F-box/kelch-repeat protein At4g39550.